A 176-amino-acid chain; its full sequence is Inorganic pyrophosphatase (176 aa).

The substrate site is built by lysine 30, arginine 44, and tyrosine 56. Positions 66, 71, and 103 each coordinate Mg(2+). Tyrosine 142 is a binding site for substrate.

This sequence belongs to the PPase family. Homohexamer. The cofactor is Mg(2+).

It is found in the cytoplasm. It catalyses the reaction diphosphate + H2O = 2 phosphate + H(+). Catalyzes the hydrolysis of inorganic pyrophosphate (PPi) forming two phosphate ions. In Salmonella typhi, this protein is Inorganic pyrophosphatase.